A 160-amino-acid polypeptide reads, in one-letter code: SsrA-binding protein (160 aa).

Residues 131–160 form a disordered region; that stretch reads KKEFDKRHTEKERDSDREIQRAMRTKGKDD.

Belongs to the SmpB family.

It localises to the cytoplasm. Its function is as follows. Required for rescue of stalled ribosomes mediated by trans-translation. Binds to transfer-messenger RNA (tmRNA), required for stable association of tmRNA with ribosomes. tmRNA and SmpB together mimic tRNA shape, replacing the anticodon stem-loop with SmpB. tmRNA is encoded by the ssrA gene; the 2 termini fold to resemble tRNA(Ala) and it encodes a 'tag peptide', a short internal open reading frame. During trans-translation Ala-aminoacylated tmRNA acts like a tRNA, entering the A-site of stalled ribosomes, displacing the stalled mRNA. The ribosome then switches to translate the ORF on the tmRNA; the nascent peptide is terminated with the 'tag peptide' encoded by the tmRNA and targeted for degradation. The ribosome is freed to recommence translation, which seems to be the essential function of trans-translation. The chain is SsrA-binding protein from Stutzerimonas stutzeri (strain A1501) (Pseudomonas stutzeri).